Here is a 311-residue protein sequence, read N- to C-terminus: Olfactory receptor 8H1 (311 aa).

Over 1–25 (MGRRNNTNVPDFILTGLSDSEEVQM) the chain is Extracellular. N-linked (GlcNAc...) asparagine glycosylation is present at asparagine 5. A helical transmembrane segment spans residues 26-46 (ALFILFLLIYLITMLGNVGMI). Topologically, residues 47 to 54 (LIIRLDLQ) are cytoplasmic. Residues 55–75 (LHTPMYFFLTHLSFIDLSYST) form a helical membrane-spanning segment. The Extracellular segment spans residues 76-98 (VITPKTLANLLTSNYISFMGCFA). A disulfide bond links cysteine 96 and cysteine 188. The helical transmembrane segment at 99 to 119 (QMFFFVFLGAAECFLLSSMAY) threads the bilayer. Topologically, residues 120-138 (DRYVAICSPLRYPVIMSKR) are cytoplasmic. A helical membrane pass occupies residues 139-159 (LCCALVTGPYVISFINSFVNV). The Extracellular portion of the chain corresponds to 160–196 (VWMSRLHFCDSNVVRHFFCDTSPILALSCMDTYDIEI). A helical membrane pass occupies residues 197–216 (MIHILAGSTLMVSLITISAS). Residues 217–236 (YVSILSTILKINSTSGKQKA) lie on the Cytoplasmic side of the membrane. A helical membrane pass occupies residues 237 to 257 (LSTCASHLLGVTIFYGTMIFT). Over 258–270 (YLKPRKSYSLGRD) the chain is Extracellular. A helical transmembrane segment spans residues 271-291 (QVASVFYTIVIPMLNPLIYSL). At 292–311 (RNKEVKNALIRVMQRRQDSR) the chain is on the cytoplasmic side.

It belongs to the G-protein coupled receptor 1 family.

The protein localises to the cell membrane. Functionally, odorant receptor. The chain is Olfactory receptor 8H1 (OR8H1) from Homo sapiens (Human).